A 160-amino-acid polypeptide reads, in one-letter code: Ureidoglycolate lyase (160 aa).

Belongs to the ureidoglycolate lyase family. In terms of assembly, homodimer. The cofactor is Ni(2+).

The catalysed reaction is (S)-ureidoglycolate = urea + glyoxylate. The protein operates within nitrogen metabolism; (S)-allantoin degradation. In terms of biological role, catalyzes the catabolism of the allantoin degradation intermediate (S)-ureidoglycolate, generating urea and glyoxylate. Involved in the utilization of allantoin as nitrogen source. In Salmonella enteritidis, this protein is Ureidoglycolate lyase.